The following is a 723-amino-acid chain: Peroxisomal bifunctional enzyme (723 aa).

Residues 1-282 (MAEYTRLHNA…FAERKANKWS (282 aa)) form an enoyl-CoA hydratase / isomerase region. K38 carries the post-translational modification N6-succinyllysine. Position 101 (G101) interacts with substrate. K165 carries the post-translational modification N6-acetyllysine; alternate. K165 is modified (N6-succinyllysine; alternate). K171 is subject to N6-acetyllysine. At K219 the chain carries N6-acetyllysine; alternate. An N6-succinyllysine; alternate modification is found at K219. K250 carries the N6-acetyllysine modification. N6-succinyllysine occurs at positions 280 and 290. Positions 283 to 572 (TPSGASWKTA…DVLCELGRFG (290 aa)) are 3-hydroxyacyl-CoA dehydrogenase. K346, K350, and K464 each carry N6-acetyllysine. The residue at position 532 (K532) is an N6-succinyllysine. The residue at position 548 (T548) is a Phosphothreonine. K577 is modified (N6-succinyllysine). N6-acetyllysine; alternate is present on residues K584, K591, and K710. Residues K584, K591, and K710 each carry the N6-succinyllysine; alternate modification. Position 718 is a phosphoserine (S718). The short motif at 721–723 (SKL) is the Microbody targeting signal element. K722 carries the post-translational modification N6-succinyllysine.

In the N-terminal section; belongs to the enoyl-CoA hydratase/isomerase family. The protein in the C-terminal section; belongs to the 3-hydroxyacyl-CoA dehydrogenase family. In terms of assembly, monomer. Post-translationally, acetylated, leading to enhanced enzyme activity. Acetylation is enhanced by up to 80% after treatment either with trichostin A (TSA) or with nicotinamide (NAM) with highest increase on Lys-346. Acetylation and enzyme activity increased by about 1.5% on addition of fatty acids. As to expression, liver and kidney. Strongly expressed in the terminal segments of the proximal tubule. Lower amounts seen in the brain.

It localises to the peroxisome. It catalyses the reaction a (3S)-3-hydroxyacyl-CoA = a (2E)-enoyl-CoA + H2O. The catalysed reaction is a 4-saturated-(3S)-3-hydroxyacyl-CoA = a (3E)-enoyl-CoA + H2O. The enzyme catalyses a (3Z)-enoyl-CoA = a 4-saturated (2E)-enoyl-CoA. It carries out the reaction a (3E)-enoyl-CoA = a 4-saturated (2E)-enoyl-CoA. It catalyses the reaction a (3S)-3-hydroxyacyl-CoA + NAD(+) = a 3-oxoacyl-CoA + NADH + H(+). The catalysed reaction is (2S,3S)-3-hydroxy-2-methylbutanoyl-CoA = (2E)-2-methylbut-2-enoyl-CoA + H2O. The enzyme catalyses (3S)-hydroxyhexadecanoyl-CoA + NAD(+) = 3-oxohexadecanoyl-CoA + NADH + H(+). It carries out the reaction (3S)-hydroxyhexadecanoyl-CoA = (2E)-hexadecenoyl-CoA + H2O. It catalyses the reaction (2E)-hexadecenedioyl-CoA + H2O = (3S)-hydroxyhexadecanedioyl-CoA. The catalysed reaction is (3S)-hydroxyhexadecanedioyl-CoA + NAD(+) = 3-oxohexadecanedioyl-CoA + NADH + H(+). The enzyme catalyses (3E,5Z)-tetradecadienoyl-CoA = (2E,5Z)-tetradecadienoyl-CoA. It carries out the reaction (3E,5Z)-octadienoyl-CoA = (2E,5Z)-octadienoyl-CoA. It catalyses the reaction (3S)-hydroxydecanoyl-CoA + NAD(+) = 3-oxodecanoyl-CoA + NADH + H(+). The catalysed reaction is (3E)-decenoyl-CoA = (2E)-decenoyl-CoA. The enzyme catalyses (3Z)-hexenoyl-CoA = (2E)-hexenoyl-CoA. It carries out the reaction (3E)-hexenoyl-CoA = (2E)-hexenoyl-CoA. It catalyses the reaction (3S)-hydroxydecanoyl-CoA = (2E)-decenoyl-CoA + H2O. The catalysed reaction is (3S)-hydroxyhexanoyl-CoA = (2E)-hexenoyl-CoA + H2O. Its pathway is lipid metabolism; fatty acid beta-oxidation. With respect to regulation, enzyme activity enhanced by acetylation. Its function is as follows. Peroxisomal trifunctional enzyme possessing 2-enoyl-CoA hydratase, 3-hydroxyacyl-CoA dehydrogenase, and delta 3, delta 2-enoyl-CoA isomerase activities. Catalyzes two of the four reactions of the long chain fatty acids peroxisomal beta-oxidation pathway. Can also use branched-chain fatty acids such as 2-methyl-2E-butenoyl-CoA as a substrate, which is hydrated into (2S,3S)-3-hydroxy-2-methylbutanoyl-CoA. Optimal isomerase for 2,5 double bonds into 3,5 form isomerization in a range of enoyl-CoA species. Also able to isomerize both 3-cis and 3-trans double bonds into the 2-trans form in a range of enoyl-CoA species. With HSD17B4, catalyzes the hydration of trans-2-enoyl-CoA and the dehydrogenation of 3-hydroxyacyl-CoA, but with opposite chiral specificity. Regulates the amount of medium-chain dicarboxylic fatty acids which are essential regulators of all fatty acid oxidation pathways. Also involved in the degradation of long-chain dicarboxylic acids through peroxisomal beta-oxidation. In Homo sapiens (Human), this protein is Peroxisomal bifunctional enzyme.